Here is a 286-residue protein sequence, read N- to C-terminus: Phycobilisome 32.1 kDa linker polypeptide, phycocyanin-associated, rod (286 aa).

Residues 2-180 (AITTAASRLG…LYRGYANSDR (179 aa)) enclose the PBS-linker domain. One can recognise a CpcD-like domain in the interval 234–286 (DRVYRLEVTGIRSPGYPSVRRSSTVFIVPYERLSDKIQQVHKQGGKIVSVTSA).

It belongs to the phycobilisome linker protein family. As to quaternary structure, associated with the phycobilisome, a hemidiscoidal structure that is composed of two distinct substructures: a core complex and a number of rods radiating from the core.

Its subcellular location is the cellular thylakoid membrane. In terms of biological role, rod linker protein, associated with phycocyanin. Linker polypeptides determine the state of aggregation and the location of the disk-shaped phycobiliprotein units within the phycobilisome and modulate their spectroscopic properties in order to mediate a directed and optimal energy transfer. The protein is Phycobilisome 32.1 kDa linker polypeptide, phycocyanin-associated, rod (cpcC) of Nostoc sp. (strain PCC 7120 / SAG 25.82 / UTEX 2576).